Reading from the N-terminus, the 397-residue chain is tRNA-specific 2-thiouridylase MnmA (397 aa).

ATP-binding positions include 19–26 (AMSGGVDS) and Leu45. Residue Cys113 is the Nucleophile of the active site. Cys113 and Cys210 are oxidised to a cystine. Gly137 is an ATP binding site. Residues 160–162 (RDQ) are interaction with tRNA. Cys210 serves as the catalytic Cysteine persulfide intermediate.

The protein belongs to the MnmA/TRMU family.

It is found in the cytoplasm. The catalysed reaction is S-sulfanyl-L-cysteinyl-[protein] + uridine(34) in tRNA + AH2 + ATP = 2-thiouridine(34) in tRNA + L-cysteinyl-[protein] + A + AMP + diphosphate + H(+). Functionally, catalyzes the 2-thiolation of uridine at the wobble position (U34) of tRNA, leading to the formation of s(2)U34. In Bradyrhizobium sp. (strain BTAi1 / ATCC BAA-1182), this protein is tRNA-specific 2-thiouridylase MnmA.